Consider the following 449-residue polypeptide: UDP-N-acetylmuramoylalanine--D-glutamate ligase (449 aa).

118-124 (GTNGKTT) is a binding site for ATP.

The protein belongs to the MurCDEF family.

It localises to the cytoplasm. The enzyme catalyses UDP-N-acetyl-alpha-D-muramoyl-L-alanine + D-glutamate + ATP = UDP-N-acetyl-alpha-D-muramoyl-L-alanyl-D-glutamate + ADP + phosphate + H(+). Its pathway is cell wall biogenesis; peptidoglycan biosynthesis. Its function is as follows. Cell wall formation. Catalyzes the addition of glutamate to the nucleotide precursor UDP-N-acetylmuramoyl-L-alanine (UMA). The protein is UDP-N-acetylmuramoylalanine--D-glutamate ligase of Staphylococcus aureus (strain Mu3 / ATCC 700698).